We begin with the raw amino-acid sequence, 23 residues long: Hongotoxin-4 (23 aa).

Belongs to the short scorpion toxin superfamily. Potassium channel inhibitor family. Alpha-KTx 02 subfamily. In terms of tissue distribution, expressed by the venom gland.

The protein localises to the secreted. Its function is as follows. Potent selective inhibitor of Kv1/KCNA voltage-gated potassium channels. The polypeptide is Hongotoxin-4 (Centruroides limbatus (Bark scorpion)).